A 454-amino-acid chain; its full sequence is Uridine kinase (454 aa).

28 to 35 (GPSGSGKT) is a binding site for ATP.

The protein belongs to the uridine kinase family.

The protein resides in the cytoplasm. It localises to the nucleus. The enzyme catalyses uridine + ATP = UMP + ADP + H(+). The catalysed reaction is cytidine + ATP = CMP + ADP + H(+). Its pathway is pyrimidine metabolism; CTP biosynthesis via salvage pathway; CTP from cytidine: step 1/3. The protein operates within pyrimidine metabolism; UMP biosynthesis via salvage pathway; UMP from uridine: step 1/1. In terms of biological role, catalyzes the conversion of uridine into UMP and cytidine into CMP in the pyrimidine salvage pathway. In Schizosaccharomyces pombe (strain 972 / ATCC 24843) (Fission yeast), this protein is Uridine kinase (urk1).